The chain runs to 198 residues: Synaptobrevin homolog YKT6 (198 aa).

A Longin domain is found at 8–126 (VLYKGEAKVV…TIHYPALDGH (119 aa)). The 61-residue stretch at 138 to 198 (PMTKVQAELD…RKQNSCCAIM (61 aa)) folds into the v-SNARE coiled-coil homology domain. Position 159 is a phosphoserine (Ser159). Cys194 carries S-palmitoyl cysteine lipidation. Cys195 is modified (cysteine methyl ester). Cys195 carries S-farnesyl cysteine lipidation. The propeptide at 196–198 (AIM) is removed in mature form.

It belongs to the synaptobrevin family. Identified in 2 different SNARE complexes; the first one composed of GOSR1, GOSR2 and STX5 and the second one composed of BET1L, GOSR1 and STX5. Post-translationally, palmitoylated; catalyzes its own palmitoylation. Palmitoylation is required for Golgi targeting. Farnesylation is required for Golgi targeting.

The protein resides in the cytoplasm. It localises to the cytosol. The protein localises to the cytoplasmic vesicle membrane. Its subcellular location is the golgi apparatus membrane. Functionally, vesicular soluble NSF attachment protein receptor (v-SNARE) mediating vesicle docking and fusion to a specific acceptor cellular compartment. Functions in endoplasmic reticulum to Golgi transport; as part of a SNARE complex composed of GOSR1, GOSR2 and STX5. Functions in early/recycling endosome to TGN transport; as part of a SNARE complex composed of BET1L, GOSR1 and STX5. Has a S-palmitoyl transferase activity. This chain is Synaptobrevin homolog YKT6 (YKT6), found in Homo sapiens (Human).